The sequence spans 58 residues: Isocitrate lyase (58 aa).

It belongs to the isocitrate lyase/PEP mutase superfamily. Isocitrate lyase family. Homotetramer. The cofactor is Mg(2+).

Its subcellular location is the glyoxysome. It catalyses the reaction D-threo-isocitrate = glyoxylate + succinate. It functions in the pathway carbohydrate metabolism; glyoxylate cycle; (S)-malate from isocitrate: step 1/2. Functionally, involved in storage lipid mobilization during the growth of higher plant seedling. The protein is Isocitrate lyase of Helianthus annuus (Common sunflower).